The chain runs to 375 residues: Glutamate 5-kinase (375 aa).

Residue Lys17 coordinates ATP. Positions 58, 145, and 157 each coordinate substrate. Residues Ser177 to Asp178 and Thr219 to Lys225 contribute to the ATP site. The 79-residue stretch at Gln281–Ala359 folds into the PUA domain.

It belongs to the glutamate 5-kinase family.

It is found in the cytoplasm. It carries out the reaction L-glutamate + ATP = L-glutamyl 5-phosphate + ADP. Its pathway is amino-acid biosynthesis; L-proline biosynthesis; L-glutamate 5-semialdehyde from L-glutamate: step 1/2. Its function is as follows. Catalyzes the transfer of a phosphate group to glutamate to form L-glutamate 5-phosphate. The chain is Glutamate 5-kinase from Streptomyces avermitilis (strain ATCC 31267 / DSM 46492 / JCM 5070 / NBRC 14893 / NCIMB 12804 / NRRL 8165 / MA-4680).